The following is a 556-amino-acid chain: Phosphoacetylglucosamine mutase (556 aa).

The active-site Phosphoserine intermediate is the serine 68. Residues serine 68, aspartate 286, aspartate 288, and aspartate 290 each coordinate Mg(2+). Serine 68 bears the Phosphoserine mark. Substrate contacts are provided by residues 386 to 388 (EAN), 518 to 522 (RPSGT), and arginine 527.

It belongs to the phosphohexose mutase family. It depends on Mg(2+) as a cofactor.

The catalysed reaction is N-acetyl-alpha-D-glucosamine 1-phosphate = N-acetyl-D-glucosamine 6-phosphate. Its pathway is nucleotide-sugar biosynthesis; UDP-N-acetyl-alpha-D-glucosamine biosynthesis; N-acetyl-alpha-D-glucosamine 1-phosphate from alpha-D-glucosamine 6-phosphate (route I): step 2/2. Functionally, interconverts GlcNAc-6-P and GlcNAc-1-P. In Arabidopsis thaliana (Mouse-ear cress), this protein is Phosphoacetylglucosamine mutase (DRT101).